We begin with the raw amino-acid sequence, 344 residues long: Axoneme-associated protein mst101(1) (344 aa).

12 repeat units span residues 74 to 89 (KKKC…EAAE), 90 to 105 (KKKC…EAAE), 106 to 121 (KKKC…EAAE), 122 to 137 (KKKC…EAAE), 138 to 153 (KKKC…EAAE), 154 to 169 (KKKC…EAAE), 170 to 185 (KKKC…CAEL), 186 to 201 (AKKE…CAEA), 202 to 217 (AKKE…CEER), 218 to 233 (AKKE…CEER), 234 to 249 (AKKE…CAEA), and 250 to 265 (AKKE…CAEA). The tract at residues 74 to 344 (KKKCAEAAKK…AAQKKCEPKK (271 aa)) is 17 X 16 AA approximate tandem repeats of K-K-K-C-X-E-X-A-[KQ]-K-X-X-E-X-A-X. The tract at residues 206-244 (KEAAEKKKCEERAKKEKEAAEKKKCEERAKKEKEAAEKK) is disordered. A 13; approximate repeat occupies 266 to 281 (AQKKKCAELAKKAKEA). One copy of the 14; approximate repeat lies at 282 to 297 (AEKKKCAKKAGEKGSK). Basic and acidic residues predominate over residues 285 to 315 (KKCAKKAGEKGSKQSGSDKGKKNGKKNDMKN). The interval 285-318 (KKCAKKAGEKGSKQSGSDKGKKNGKKNDMKNKCA) is disordered. The 15; approximate repeat unit spans residues 298–313 (QSGSDKGKKNGKKNDM). The stretch at 314–329 (KNKCAMLAKKAKEEAL) is repeat 16. The stretch at 330 to 344 (KKKCAAAQKKCEPKK) is one 17; truncated repeat.

Testis. Located in spermatocytes and spermatid bundles.

The protein localises to the cytoplasm. Functionally, possible structural role in the sperm tail. It is associated with axonemal structures. The chain is Axoneme-associated protein mst101(1) (mst101(1)) from Drosophila hydei (Fruit fly).